Consider the following 239-residue polypeptide: Ribonuclease PH (239 aa).

Residues R86 and 124 to 126 contribute to the phosphate site; that span reads GTR.

This sequence belongs to the RNase PH family. Homohexameric ring arranged as a trimer of dimers.

It carries out the reaction tRNA(n+1) + phosphate = tRNA(n) + a ribonucleoside 5'-diphosphate. Phosphorolytic 3'-5' exoribonuclease that plays an important role in tRNA 3'-end maturation. Removes nucleotide residues following the 3'-CCA terminus of tRNAs; can also add nucleotides to the ends of RNA molecules by using nucleoside diphosphates as substrates, but this may not be physiologically important. Probably plays a role in initiation of 16S rRNA degradation (leading to ribosome degradation) during starvation. The chain is Ribonuclease PH from Rhizobium etli (strain ATCC 51251 / DSM 11541 / JCM 21823 / NBRC 15573 / CFN 42).